The chain runs to 300 residues: D-alanine--D-alanine ligase (300 aa).

The 195-residue stretch at 99–293 (KKILKYANIN…FAELLNSIVK (195 aa)) folds into the ATP-grasp domain. Residue 126–181 (IEKIGYPVFVKPNSGGSSVATNLVKNKEGIKEAVELALKYDKEVMIENYTKGEEIT) coordinates ATP. Mg(2+) is bound by residues Asp248, Glu260, and Asn262.

It belongs to the D-alanine--D-alanine ligase family. Mg(2+) is required as a cofactor. It depends on Mn(2+) as a cofactor.

It is found in the cytoplasm. It catalyses the reaction 2 D-alanine + ATP = D-alanyl-D-alanine + ADP + phosphate + H(+). It participates in cell wall biogenesis; peptidoglycan biosynthesis. Its function is as follows. Cell wall formation. In Clostridium botulinum (strain Loch Maree / Type A3), this protein is D-alanine--D-alanine ligase.